The sequence spans 483 residues: Glutamate--tRNA ligase (483 aa).

The 'HIGH' region signature appears at 11–21 (PSPTGLLHIGN). Residues 255 to 259 (KLSKR) carry the 'KMSKS' region motif. ATP is bound at residue K258.

Belongs to the class-I aminoacyl-tRNA synthetase family. Glutamate--tRNA ligase type 1 subfamily. As to quaternary structure, monomer.

It is found in the cytoplasm. It catalyses the reaction tRNA(Glu) + L-glutamate + ATP = L-glutamyl-tRNA(Glu) + AMP + diphosphate. In terms of biological role, catalyzes the attachment of glutamate to tRNA(Glu) in a two-step reaction: glutamate is first activated by ATP to form Glu-AMP and then transferred to the acceptor end of tRNA(Glu). The protein is Glutamate--tRNA ligase of Lactococcus lactis subsp. lactis (strain IL1403) (Streptococcus lactis).